Consider the following 55-residue polypeptide: MAKPTTVKIRLVSSADTGFFYVTRKNPRNQTEKMSLRKYDPVVRKHVEFKEAKIK.

This sequence belongs to the bacterial ribosomal protein bL33 family.

The sequence is that of Large ribosomal subunit protein bL33 from Zymomonas mobilis subsp. mobilis (strain ATCC 31821 / ZM4 / CP4).